The sequence spans 367 residues: 3-isopropylmalate dehydrogenase (367 aa).

77-90 (GPKYDDLDFSVKPE) provides a ligand contact to NAD(+). Substrate-binding residues include R97, R107, R135, and D224. Mg(2+) is bound by residues D224, D248, and D252. 287–299 (GSAPDIAGQGKAN) lines the NAD(+) pocket.

Belongs to the isocitrate and isopropylmalate dehydrogenases family. LeuB type 1 subfamily. As to quaternary structure, homodimer. Mg(2+) is required as a cofactor. Requires Mn(2+) as cofactor.

It is found in the cytoplasm. The enzyme catalyses (2R,3S)-3-isopropylmalate + NAD(+) = 4-methyl-2-oxopentanoate + CO2 + NADH. It participates in amino-acid biosynthesis; L-leucine biosynthesis; L-leucine from 3-methyl-2-oxobutanoate: step 3/4. Its function is as follows. Catalyzes the oxidation of 3-carboxy-2-hydroxy-4-methylpentanoate (3-isopropylmalate) to 3-carboxy-4-methyl-2-oxopentanoate. The product decarboxylates to 4-methyl-2 oxopentanoate. The polypeptide is 3-isopropylmalate dehydrogenase (Ruegeria pomeroyi (strain ATCC 700808 / DSM 15171 / DSS-3) (Silicibacter pomeroyi)).